Reading from the N-terminus, the 1100-residue chain is Exportin-T (1100 aa).

Belongs to the exportin family. As to quaternary structure, interacts with GSP1, GSP2, NSP1, NUP2 and UTP8.

It is found in the nucleus. Its subcellular location is the cytoplasm. TRNA nucleus export receptor which facilitates tRNA translocation across the nuclear pore complex. Preferentially interacts with tRNAs with mature 5'- and 3'-termini and does not distinguish between intron-containing and spliced tRNAs. In the nucleus binds to tRNA and to the Ran-GTPases GSP1 or GSP2 in their active GTP-bound form. Docking of this trimeric complex to the nuclear pore complex (NPC) is mediated through binding to nucleoporins. Upon transit of a nuclear export complex into the cytoplasm, disassembling of the complex and hydrolysis of Ran-GTP to Ran-GDP cause release of the tRNA from the export receptor. The directionality of nuclear export is thought to be conferred by an asymmetric distribution of the GTP- and GDP-bound forms of Ran between the cytoplasm and nucleus. Involved in pre-tRNA splicing, probably by affecting the interaction of pre-tRNA with splicing endonuclease. The polypeptide is Exportin-T (LOS1) (Saccharomyces cerevisiae (strain YJM789) (Baker's yeast)).